Consider the following 156-residue polypeptide: RNA polymerase sigma factor SigS (156 aa).

Residues 29–44 carry the Polymerase core binding motif; the sequence is EYYQLLLIKMWQLSQI. Positions 126 to 145 form a DNA-binding region, H-T-H motif; sequence QFEIAEIMSLSLSTIKLIKM.

It belongs to the sigma-70 factor family.

Sigma factors are initiation factors that promote the attachment of RNA polymerase to specific initiation sites and are then released. Sigma-S contributes to the protection against external stress, thus playing a role in cellular fitness and survival. The protein is RNA polymerase sigma factor SigS (sigS) of Staphylococcus aureus (strain NCTC 8325 / PS 47).